A 282-amino-acid chain; its full sequence is E3 ubiquitin-protein ligase SIAH1B (282 aa).

The span at 1–17 (MSRQAATALSTGTSKCP) shows a compositional bias: polar residues. A disordered region spans residues 1–23 (MSRQAATALSTGTSKCPPSQRVP). Residue serine 19 is modified to Phosphoserine; by ATM and ATR. The RING-type zinc-finger motif lies at 41 to 76 (CPVCFDYVLPPILQCQSGHLVCSNCRPKLTCCPTCR). The interval 90 to 282 (VANSVLFPCK…LGINVTISMC (193 aa)) is SBD. The SIAH-type zinc-finger motif lies at 93-153 (SVLFPCKYSA…VMPHLMHQHK (61 aa)). Residues cysteine 98, cysteine 105, histidine 117, cysteine 121, cysteine 128, cysteine 135, histidine 147, and histidine 152 each contribute to the Zn(2+) site.

This sequence belongs to the SINA (Seven in absentia) family. As to quaternary structure, homodimer. Phosphorylated on Ser-19 by ATM and ATR. In terms of tissue distribution, widely expressed at low level in embryos and adults. Due to the high similarity between SIAH1A and SIAH1B, it is difficult to distinguish its own tissue specificity. Overexpressed in endothelial cells of adult lung.

The protein localises to the cytoplasm. The protein resides in the nucleus. The catalysed reaction is S-ubiquitinyl-[E2 ubiquitin-conjugating enzyme]-L-cysteine + [acceptor protein]-L-lysine = [E2 ubiquitin-conjugating enzyme]-L-cysteine + N(6)-ubiquitinyl-[acceptor protein]-L-lysine.. The protein operates within protein modification; protein ubiquitination. Functionally, E3 ubiquitin-protein ligase that mediates ubiquitination and subsequent proteasomal degradation of target proteins. E3 ubiquitin ligases accept ubiquitin from an E2 ubiquitin-conjugating enzyme in the form of a thioester and then directly transfers the ubiquitin to targeted substrates. Mediates E3 ubiquitin ligase activity either through direct binding to substrates or by functioning as the essential RING domain subunit of larger E3 complexes. This is E3 ubiquitin-protein ligase SIAH1B (Siah1b) from Mus musculus (Mouse).